A 158-amino-acid polypeptide reads, in one-letter code: MTRLLGIIRIRGYAGTPWYIQDTLKMLRLPRRFNAMVYEDSSSIRGMLKIAEPYITWGELNEEGLKLLLTRLHTKIGNLKITDDILKSQLKIESYNLFVKKIMDGEIKLHKLDDYFKLPIRLHPPSGGFKGKINRPFSVKGEFGYRGEKINELIKRMV.

Belongs to the universal ribosomal protein uL30 family. Part of the 50S ribosomal subunit.

The chain is Large ribosomal subunit protein uL30 from Sulfurisphaera tokodaii (strain DSM 16993 / JCM 10545 / NBRC 100140 / 7) (Sulfolobus tokodaii).